A 1203-amino-acid chain; its full sequence is ATP-dependent helicase/nuclease subunit A (1203 aa).

Positions 4–472 constitute a UvrD-like helicase ATP-binding domain; sequence VKLTPEQNEA…IRLKENFRSR (469 aa). 25–32 is a binding site for ATP; that stretch reads ASAGSGKT. Positions 503 to 785 constitute a UvrD-like helicase C-terminal domain; the sequence is VQGNISDYPV…RVMTFHKSKG (283 aa).

It belongs to the helicase family. AddA subfamily. As to quaternary structure, heterodimer of AddA and AddB/RexB. Mg(2+) serves as cofactor.

It catalyses the reaction Couples ATP hydrolysis with the unwinding of duplex DNA by translocating in the 3'-5' direction.. It carries out the reaction ATP + H2O = ADP + phosphate + H(+). Functionally, the heterodimer acts as both an ATP-dependent DNA helicase and an ATP-dependent, dual-direction single-stranded exonuclease. Recognizes the chi site generating a DNA molecule suitable for the initiation of homologous recombination. The AddA nuclease domain is required for chi fragment generation; this subunit has the helicase and 3' -&gt; 5' nuclease activities. The chain is ATP-dependent helicase/nuclease subunit A from Lactococcus lactis subsp. cremoris (strain SK11).